Consider the following 307-residue polypeptide: D-alanine--D-alanine ligase (307 aa).

Residues 101–301 (RDVLAAAGVP…FGELVRWMVD (201 aa)) enclose the ATP-grasp domain. 128–182 (LPPPYVIKPLGEGSSFGVFIVREDQAYPPQELTRSDWAFGNRVLVESYIGGRELT) serves as a coordination point for ATP. Residues Asp-251, Glu-268, and Asn-270 each coordinate Mg(2+).

It belongs to the D-alanine--D-alanine ligase family. It depends on Mg(2+) as a cofactor. Mn(2+) is required as a cofactor.

The protein resides in the cytoplasm. The catalysed reaction is 2 D-alanine + ATP = D-alanyl-D-alanine + ADP + phosphate + H(+). It participates in cell wall biogenesis; peptidoglycan biosynthesis. Its function is as follows. Cell wall formation. The sequence is that of D-alanine--D-alanine ligase from Beijerinckia indica subsp. indica (strain ATCC 9039 / DSM 1715 / NCIMB 8712).